The following is a 176-amino-acid chain: Flavodoxin (176 aa).

The Flavodoxin-like domain occupies 4–172 (IGIFFGTDTG…RLASWLEEIK (169 aa)).

It belongs to the flavodoxin family. The cofactor is FMN.

In terms of biological role, low-potential electron donor to a number of redox enzymes. NifF is the electron donor to nitrogenase. The sequence is that of Flavodoxin (nifF) from Klebsiella pneumoniae.